The following is a 100-amino-acid chain: uncharacterized protein (100 aa).

The protein resides in the secreted. This is an uncharacterized protein from Mycobacterium leprae (strain TN).